Consider the following 600-residue polypeptide: Proline--tRNA ligase (600 aa).

This sequence belongs to the class-II aminoacyl-tRNA synthetase family. ProS type 1 subfamily. As to quaternary structure, homodimer.

The protein localises to the cytoplasm. The enzyme catalyses tRNA(Pro) + L-proline + ATP = L-prolyl-tRNA(Pro) + AMP + diphosphate. Catalyzes the attachment of proline to tRNA(Pro) in a two-step reaction: proline is first activated by ATP to form Pro-AMP and then transferred to the acceptor end of tRNA(Pro). As ProRS can inadvertently accommodate and process non-cognate amino acids such as alanine and cysteine, to avoid such errors it has two additional distinct editing activities against alanine. One activity is designated as 'pretransfer' editing and involves the tRNA(Pro)-independent hydrolysis of activated Ala-AMP. The other activity is designated 'posttransfer' editing and involves deacylation of mischarged Ala-tRNA(Pro). The misacylated Cys-tRNA(Pro) is not edited by ProRS. The sequence is that of Proline--tRNA ligase from Synechococcus sp. (strain RCC307).